Here is a 238-residue protein sequence, read N- to C-terminus: MARGCLQGVKYLMFAFNLLFWLGGCGVLGVGIWLAATQGNFATLSSSFPSLSAANLLIVTGTFVMAIGFVGCIGALKENKCLLLTFFVLLLLVFLLEATIAVLFFAYSDKIDSYAQQDLKKGLHLYGTQGNVGLTNAWSIIQTDFRCCGVSNYTDWFEVYNATRVPDSCCLEFSDSCGLHEPGTWWKSPCYETVKAWLQENLLAVGIFGLCTALVQILGLTFAMTMYCQVVKADTYCA.

Over 1–13 (MARGCLQGVKYLM) the chain is Cytoplasmic. The chain crosses the membrane as a helical span at residues 14 to 34 (FAFNLLFWLGGCGVLGVGIWL). Residues 35–55 (AATQGNFATLSSSFPSLSAAN) lie on the Extracellular side of the membrane. The helical transmembrane segment at 56 to 76 (LLIVTGTFVMAIGFVGCIGAL) threads the bilayer. The Cytoplasmic segment spans residues 77–85 (KENKCLLLT). A helical membrane pass occupies residues 86–106 (FFVLLLLVFLLEATIAVLFFA). Over 107–201 (YSDKIDSYAQ…ETVKAWLQEN (95 aa)) the chain is Extracellular. 2 N-linked (GlcNAc...) asparagine glycosylation sites follow: Asn-152 and Asn-161. Residues 202-222 (LLAVGIFGLCTALVQILGLTF) traverse the membrane as a helical segment. At 223-238 (AMTMYCQVVKADTYCA) the chain is on the cytoplasmic side.

This sequence belongs to the tetraspanin (TM4SF) family. In terms of assembly, forms a complex with integrins.

Its subcellular location is the membrane. This Mus musculus (Mouse) protein is Tetraspanin-4 (Tspan4).